Consider the following 528-residue polypeptide: Atypical kinase COQ8B, mitochondrial (528 aa).

The helical transmembrane segment at 93–109 (LASFGGLAVGLGLGALA) threads the bilayer. The KxGQ motif signature appears at 151 to 154 (KIGQ). A Protein kinase domain is found at 187 to 419 (MMKVLEEELG…DRVLQKSQDL (233 aa)). The AAAS motif motif lies at 212–215 (AAAS). ATP is bound by residues Ser-215, Lys-233, and 320-323 (MELA). Asp-363 acts as the Proton acceptor in catalysis. Residues Asn-368 and Asp-382 each contribute to the ATP site.

This sequence belongs to the protein kinase superfamily. ADCK protein kinase family. Homodimer; homodimerizes via its transmembrane region. Interacts with COQ6 and COQ7. Interacts with the multi-subunit COQ enzyme complex, composed of at least COQ3, COQ4, COQ5, COQ6, COQ7 and COQ9. In the kidney, expressed in glomeruli, predominantly in podocyte foot precesses, as well as in proximal tubules and collecting ducts (at protein level).

It is found in the mitochondrion membrane. It localises to the cytoplasm. The protein localises to the cytosol. The protein resides in the cell membrane. Its pathway is cofactor biosynthesis; ubiquinone biosynthesis. Its function is as follows. Atypical kinase involved in the biosynthesis of coenzyme Q, also named ubiquinone, an essential lipid-soluble electron transporter for aerobic cellular respiration. Its substrate specificity is still unclear: may act as a protein kinase that mediates phosphorylation of COQ3. According to other reports, acts as a small molecule kinase, possibly a lipid kinase that phosphorylates a prenyl lipid in the ubiquinone biosynthesis pathway, as suggested by its ability to bind coenzyme Q lipid intermediates. However, the small molecule kinase activity was not confirmed by another publication. Required for podocyte migration. The sequence is that of Atypical kinase COQ8B, mitochondrial from Rattus norvegicus (Rat).